Here is a 1072-residue protein sequence, read N- to C-terminus: Serine/threonine-protein kinase 11-interacting protein (1072 aa).

LRR repeat units follow at residues 109–130 (SLRQLELRGVPIHSLCGLRGIY), 132–152 (QLESLVCNRSIQALEELLSAC), 164–185 (ALLSADFSYNALRSLDSSLRLL), 187–209 (ALRFLNLSHNHLQDCKGFLMDLC), 210–231 (ELYHLDISYNHLRLVPRVGPSG), 233–254 (ALGTLILRANELRSLQGLEQLK), 255–276 (NLRHLDVAYNLLEGHTELAPLW), and 280–301 (ELRKLYLEGNPLWFHPAHRAAT). Positions 333-366 (DSSGLGPVIQPLSWPVGSTTETSGGPELSDSLSS) are disordered. Phosphoserine is present on residues S388, S390, and S393. Positions 441 to 454 (MGSSPLSTTKTPAL) are enriched in polar residues. Disordered stretches follow at residues 441–522 (MGSS…EQKA) and 741–762 (RPDGIPPQTSISHDRSSWSLSP). Basic and acidic residues-rich tracts occupy residues 478–492 (KESPEKVSEEGRVEP) and 501–510 (EQDKEEGSRE). Phosphoserine occurs at positions 757, 761, and 763. Residues 967 to 993 (HAESPLPVVSDETSEQPASLGPGPSLQ) are disordered.

It belongs to the STK11IP family. As to quaternary structure, found in a ternary complex composed of STK11/LKB1, STK11IP and SMAD4. Interacts with SMAD4. Interacts with STK11/LKB1.

Its subcellular location is the cytoplasm. Functionally, may regulate STK11/LKB1 function by controlling its subcellular localization. This is Serine/threonine-protein kinase 11-interacting protein (Stk11ip) from Mus musculus (Mouse).